We begin with the raw amino-acid sequence, 347 residues long: Monopolin complex subunit LRS4 (347 aa).

The stretch at 46–118 (KKVVDETLFL…QISVDKHNKE (73 aa)) forms a coiled coil. The span at 112-130 (VDKHNKERTPSTGRDEQQR) shows a compositional bias: basic and acidic residues. 2 disordered regions span residues 112-183 (VDKH…SLLS) and 208-230 (RNDT…LQKS). Polar residues-rich tracts occupy residues 131–140 (NSKAAHTSKP) and 155–172 (NNQT…PTSQ). Ser-168 and Ser-230 each carry phosphoserine.

As to quaternary structure, component of the monopolin complex composed of at least CSM1, LRS4 and MAM1. The complex associates with the kinetochore. Post-translationally, phosphorylated by CDC5. This phosphorylation is required for the location to the kinetochores during late pachytene.

It is found in the nucleus. Its subcellular location is the nucleolus. It localises to the chromosome. The protein localises to the centromere. In terms of biological role, component of the monopolin complex which promotes monoorientation during meiosis I, required for chromosome segregation during meiosis. Involved in rDNA silencing. The sequence is that of Monopolin complex subunit LRS4 (LRS4) from Saccharomyces cerevisiae (strain ATCC 204508 / S288c) (Baker's yeast).